The primary structure comprises 387 residues: Succinate--CoA ligase [ADP-forming] subunit beta (387 aa).

Positions 9–244 constitute an ATP-grasp domain; it reads KEVLRKFGVA…LNEEEPSEIE (236 aa). ATP contacts are provided by residues Lys46, 53 to 55, Glu99, Cys102, and Glu107; that span reads GRG. Asn199 and Asp213 together coordinate Mg(2+). Residues Asn264 and 321–323 contribute to the substrate site; that span reads GIM.

It belongs to the succinate/malate CoA ligase beta subunit family. In terms of assembly, heterotetramer of two alpha and two beta subunits. Mg(2+) serves as cofactor.

The enzyme catalyses succinate + ATP + CoA = succinyl-CoA + ADP + phosphate. It carries out the reaction GTP + succinate + CoA = succinyl-CoA + GDP + phosphate. It participates in carbohydrate metabolism; tricarboxylic acid cycle; succinate from succinyl-CoA (ligase route): step 1/1. Functionally, succinyl-CoA synthetase functions in the citric acid cycle (TCA), coupling the hydrolysis of succinyl-CoA to the synthesis of either ATP or GTP and thus represents the only step of substrate-level phosphorylation in the TCA. The beta subunit provides nucleotide specificity of the enzyme and binds the substrate succinate, while the binding sites for coenzyme A and phosphate are found in the alpha subunit. This chain is Succinate--CoA ligase [ADP-forming] subunit beta, found in Bdellovibrio bacteriovorus (strain ATCC 15356 / DSM 50701 / NCIMB 9529 / HD100).